The primary structure comprises 493 residues: Probable cytosol aminopeptidase (493 aa).

2 residues coordinate Mn(2+): Lys265 and Asp270. Lys277 is an active-site residue. Positions 288, 347, and 349 each coordinate Mn(2+). The active site involves Arg351.

It belongs to the peptidase M17 family. The cofactor is Mn(2+).

Its subcellular location is the cytoplasm. It carries out the reaction Release of an N-terminal amino acid, Xaa-|-Yaa-, in which Xaa is preferably Leu, but may be other amino acids including Pro although not Arg or Lys, and Yaa may be Pro. Amino acid amides and methyl esters are also readily hydrolyzed, but rates on arylamides are exceedingly low.. It catalyses the reaction Release of an N-terminal amino acid, preferentially leucine, but not glutamic or aspartic acids.. Presumably involved in the processing and regular turnover of intracellular proteins. Catalyzes the removal of unsubstituted N-terminal amino acids from various peptides. This chain is Probable cytosol aminopeptidase, found in Hydrogenovibrio crunogenus (strain DSM 25203 / XCL-2) (Thiomicrospira crunogena).